The chain runs to 256 residues: tRNA pseudouridine synthase A (256 aa).

The active-site Nucleophile is the Asp-52. Tyr-110 serves as a coordination point for substrate.

Belongs to the tRNA pseudouridine synthase TruA family. In terms of assembly, homodimer.

The catalysed reaction is uridine(38/39/40) in tRNA = pseudouridine(38/39/40) in tRNA. Its function is as follows. Formation of pseudouridine at positions 38, 39 and 40 in the anticodon stem and loop of transfer RNAs. The polypeptide is tRNA pseudouridine synthase A (Stenotrophomonas maltophilia (strain R551-3)).